The primary structure comprises 651 residues: ATP-binding cassette sub-family G member 5 (651 aa).

The segment at 1-32 (MGDLSSLTPGGSMGLQVNRGSQSSLEGAPATA) is disordered. Residues 1–383 (MGDLSSLTPG…RVTRNLVRNK (383 aa)) are Cytoplasmic-facing. Positions 52–293 (RPWWDITSCR…FNDCGYPCPE (242 aa)) constitute an ABC transporter domain. ATP is bound at residue 86-93 (GSSGSGKT). A helical membrane pass occupies residues 384-404 (LAVITRLLQNLIMGLFLLFFV). One can recognise an ABC transmembrane type-2 domain in the interval 388 to 645 (TRLLQNLIMG…ILGIVVFKIR (258 aa)). Residues 405–421 (LRVRSNVLKGAIQDRVG) lie on the Extracellular side of the membrane. Residues 422 to 442 (LLYQFVGATPYTGMLNAVNLF) form a helical membrane-spanning segment. At 443-467 (PVLRAVSDQESQDGLYQKWQMMLAY) the chain is on the cytoplasmic side. The chain crosses the membrane as a helical span at residues 468 to 489 (ALHVLPFSVVATMIFSSVCYWT). Over 490-500 (LGLHPEVARFG) the chain is Extracellular. Residues 501–521 (YFSAALLAPHLIGEFLTLVLL) form a helical membrane-spanning segment. Over 522–528 (GIVQNPN) the chain is Cytoplasmic. The chain crosses the membrane as a helical span at residues 529–549 (IVNSVVALLSIAGVLVGSGFL). Residues 550–623 (RNIQEMPIPF…PGATSRFTMN (74 aa)) lie on the Extracellular side of the membrane. N-linked (GlcNAc...) asparagine glycans are attached at residues Asn584 and Asn591. The chain crosses the membrane as a helical span at residues 624–644 (FLILYSFIPALVILGIVVFKI). Residues 645–651 (RDHLISR) are Cytoplasmic-facing.

This sequence belongs to the ABC transporter superfamily. ABCG family. Eye pigment precursor importer (TC 3.A.1.204) subfamily. As to quaternary structure, heterodimer with ABCG8. The cofactor is Mg(2+). In terms of processing, N-glycosylated. As to expression, strongly expressed in the liver, lower levels in the small intestine and colon.

The protein localises to the cell membrane. It localises to the apical cell membrane. It catalyses the reaction cholesterol(in) + ATP + H2O = cholesterol(out) + ADP + phosphate + H(+). It carries out the reaction sitosterol(in) + ATP + H2O = sitosterol(out) + ADP + phosphate + H(+). The ATPase activity of the heterodimer is stimulated by cholate. Taurocholate, glycocholate, taurochenodeoxycholate, glycochenodeoxycholate and taurodeoxycholate also stimulate ATPase activity, but to a lower degree. Glycodeoxycholate has no significant effect on ATPase activity. ATPase activity is inhibited by vanadate and by berillium fluoride. Its function is as follows. ABCG5 and ABCG8 form an obligate heterodimer that mediates Mg(2+)- and ATP-dependent sterol transport across the cell membrane. Plays an essential role in the selective transport of dietary plant sterols and cholesterol in and out of the enterocytes and in the selective sterol excretion by the liver into bile. Required for normal sterol homeostasis. The heterodimer with ABCG8 has ATPase activity. This is ATP-binding cassette sub-family G member 5 from Homo sapiens (Human).